The chain runs to 870 residues: MKKTTWFAGRFPGYVSPLSSVALSVLAALCPLTSRGESYFNPAFLSADTASVADLSRFEKGNHQPPGIYRVDIWRNDEFVATQDIRFEAGAVGTGDKSGGLMPCFTPEWIKRLGVNTAAFPVSDKGVDTTCIHLPEKIPGAEVAFDFASMRLNISLPQASLLNSARGYIPPEEWDEGIPAALINYSFTGSRGTDSDSYFLSLLSGLNYGPWRLRNNGAWNYSKGDGYHSQRWNNIGTWVQRAIIPLKSELVMGDSNTGNDVFDSVGFRGARLYSSDNMYPDSLQGYAPTVRGIARTAAKLTIRQNGYVIYQSYVSPGAFAITDLNPTSSSGDLEVTVDEKDGSQQRYTVPYSTVPLLQREGRVKYDLVAGDFRSGNSQQSSPFFFQGTVIAGLPAGLTAYGGTQLADRYRAVVVGAGRNLGDWGAVSVDVTHARSQLADDSTHQGQSLRFLYAKSLNNYGTNFQLLGYRYSTRGFYTLDDVAYRSMEGYDYEYDSDGRRHKVPVAQSYHNLRYSKKGRFQVNISQNLGDYGSLYLSGSQQNYWNTADTNTWYQLGYASGWQGISYSLSWSWSESVGSSGADRILAFNMSVPFSVLTGRRYARDTILDRTYATFNANRNRDGDNSWQTGVGGTLLEGRNLSYSVTQGRSSSNGYSGSASASWQATYGTLGVGYNYDRDQHDYNWQLSGGVVGHADGITFSQPLGDTNVLIKAPGAKGVRIENQTGVKTDWRGYAVMPYATVYRYNRVALDTNTMDNHTDVENNVSSVVPTEGALVRAAFDTRIGVRAIITARLGGRPLPFGAIVRETASGITSMVGDDGQIYLSGLPLKGELFIQWGEGKNARCIAPYALAEDSLKQAITIASATCIRPAS.

Positions 1-27 (MKKTTWFAGRFPGYVSPLSSVALSVLA) are cleaved as a signal peptide. Cys843 and Cys865 are disulfide-bonded.

It belongs to the fimbrial export usher family.

It is found in the cell outer membrane. Involved in the export and assembly of FimA fimbrial subunits across the outer membrane. This Salmonella typhimurium (strain LT2 / SGSC1412 / ATCC 700720) protein is Outer membrane usher protein FimD (fimD).